The sequence spans 285 residues: MIASKETKEKIRNFIGGFASGAASTLAGHPFDTLKVRLQTEGSTGRFRGLAHCFTTTIKEEGFFALYKGVTPPLLGMSIINSCMFGAMNIVKSKIHTDKSTPISLGEIMVSGAITGWIVSFVACPIETVKSKLQVQYTGVKLYNGPIDCIKKIGIRGLYKALIPTGFQRNSLYAYFGCYELAQRYLRREDGSMTMGRSFIAGGIAGTGFWLTNFPFDVIRSRIMTMPYNESPPRYKGMIDCAKHIYRVDGLKGFWKGFSPCLLRTFPANGATFVAYECVMKFFPM.

The Mitochondrial intermembrane segment spans residues 1–13 (MIASKETKEKIRN). 3 Solcar repeats span residues 8 to 94 (KEKI…VKSK), 103 to 185 (ISLG…AQRY), and 193 to 282 (MTMG…VMKF). The chain crosses the membrane as a helical span at residues 14 to 34 (FIGGFASGAASTLAGHPFDTL). Residues 35 to 69 (KVRLQTEGSTGRFRGLAHCFTTTIKEEGFFALYKG) are Mitochondrial matrix-facing. The chain crosses the membrane as a helical span at residues 70-90 (VTPPLLGMSIINSCMFGAMNI). The Mitochondrial intermembrane portion of the chain corresponds to 91 to 102 (VKSKIHTDKSTP). The helical transmembrane segment at 103–123 (ISLGEIMVSGAITGWIVSFVA) threads the bilayer. Topologically, residues 124 to 156 (CPIETVKSKLQVQYTGVKLYNGPIDCIKKIGIR) are mitochondrial matrix. A helical transmembrane segment spans residues 157-177 (GLYKALIPTGFQRNSLYAYFG). Residues 178 to 198 (CYELAQRYLRREDGSMTMGRS) lie on the Mitochondrial intermembrane side of the membrane. A helical transmembrane segment spans residues 199 to 219 (FIAGGIAGTGFWLTNFPFDVI). The Mitochondrial matrix portion of the chain corresponds to 220-256 (RSRIMTMPYNESPPRYKGMIDCAKHIYRVDGLKGFWK). Residues 257–277 (GFSPCLLRTFPANGATFVAYE) form a helical membrane-spanning segment. The Mitochondrial intermembrane segment spans residues 278–285 (CVMKFFPM).

Belongs to the mitochondrial carrier (TC 2.A.29) family.

The protein resides in the mitochondrion inner membrane. Functionally, mitochondrial solute carriers shuttle metabolites, nucleotides, and cofactors through the mitochondrial inner membrane. In Dictyostelium discoideum (Social amoeba), this protein is Mitochondrial substrate carrier family protein L (mcfL).